The sequence spans 450 residues: UPF0210 protein CPF_1748 (450 aa).

It belongs to the UPF0210 family. In terms of assembly, homodimer.

The chain is UPF0210 protein CPF_1748 from Clostridium perfringens (strain ATCC 13124 / DSM 756 / JCM 1290 / NCIMB 6125 / NCTC 8237 / Type A).